The following is a 96-amino-acid chain: C-C motif chemokine 20 (96 aa).

A signal peptide spans 1 to 26; the sequence is MMCSSKNLLLAALMSVLLLHFCSKSE. Intrachain disulfides connect C32/C58 and C33/C74.

It belongs to the intercrine beta (chemokine CC) family.

It is found in the secreted. Acts as a ligand for C-C chemokine receptor CCR6. Signals through binding and activation of CCR6 and induces a strong chemotactic response and mobilization of intracellular calcium ions. The ligand-receptor pair CCL20-CCR6 is responsible for the chemotaxis of dendritic cells (DC), effector/memory T-cells and B-cells and plays an important role at skin and mucosal surfaces under homeostatic and inflammatory conditions, as well as in pathology, including cancer and autoimmune diseases. CCL20 acts as a chemotactic factor that attracts lymphocytes and, slightly, neutrophils, but not monocytes. Involved in the recruitment of both the pro-inflammatory IL17 producing helper T-cells (Th17) and the regulatory T-cells (Treg) to sites of inflammation. Required for optimal migration of thymic natural regulatory T cells (nTregs) and DN1 early thymocyte progenitor cells. Positively regulates sperm motility and chemotaxis via its binding to CCR6 which triggers Ca2+ mobilization in the sperm which is important for its motility. May be involved in formation and function of the mucosal lymphoid tissues by attracting lymphocytes and dendritic cells towards epithelial cells. In Bos taurus (Bovine), this protein is C-C motif chemokine 20 (CCL20).